Here is a 348-residue protein sequence, read N- to C-terminus: Protein RecA (348 aa).

Position 67-74 (67-74) interacts with ATP; that stretch reads GPESSGKT.

This sequence belongs to the RecA family.

It is found in the cytoplasm. Can catalyze the hydrolysis of ATP in the presence of single-stranded DNA, the ATP-dependent uptake of single-stranded DNA by duplex DNA, and the ATP-dependent hybridization of homologous single-stranded DNAs. It interacts with LexA causing its activation and leading to its autocatalytic cleavage. This chain is Protein RecA, found in Cutibacterium acnes (Propionibacterium acnes).